Here is a 689-residue protein sequence, read N- to C-terminus: Potassium-transporting ATPase ATP-binding subunit (689 aa).

Helical transmembrane passes span 35 to 55 (VMFV…AILA), 62 to 82 (AAFT…ANFA), 220 to 240 (ALTI…ATLF), and 260 to 280 (VLVA…LSAI). The active-site 4-aspartylphosphate intermediate is the aspartate 313. ATP-binding positions include aspartate 350, glutamate 354, 383-390 (FSAQTRMS), and lysine 401. Mg(2+)-binding residues include aspartate 524 and aspartate 528. Transmembrane regions (helical) follow at residues 594-614 (FAII…LNVM), 622-642 (AIMS…PLAL), and 665-685 (VGGL…LVAL).

The protein belongs to the cation transport ATPase (P-type) (TC 3.A.3) family. Type IA subfamily. As to quaternary structure, the system is composed of three essential subunits: KdpA, KdpB and KdpC.

The protein resides in the cell inner membrane. The enzyme catalyses K(+)(out) + ATP + H2O = K(+)(in) + ADP + phosphate + H(+). Functionally, part of the high-affinity ATP-driven potassium transport (or Kdp) system, which catalyzes the hydrolysis of ATP coupled with the electrogenic transport of potassium into the cytoplasm. This subunit is responsible for energy coupling to the transport system and for the release of the potassium ions to the cytoplasm. The protein is Potassium-transporting ATPase ATP-binding subunit of Serratia proteamaculans (strain 568).